Consider the following 667-residue polypeptide: Acyl-coenzyme A oxidase acox-3 (667 aa).

FAD contacts are provided by residues 138-141 (FCLT), 146-147 (GS), Gly-178, Arg-313, 334-337 (QQYR), and Gly-410. Glu-433 (proton acceptor) is an active-site residue. Glu-435 contributes to the FAD binding site. A Microbody targeting signal motif is present at residues 665-667 (SKL).

This sequence belongs to the acyl-CoA oxidase family. Homodimer. Requires FAD as cofactor. In terms of tissue distribution, expressed in intestine.

The protein resides in the peroxisome. The enzyme catalyses IC-asc-C7-CoA + O2 = IC-asc-DeltaC7-CoA + H2O2. It catalyses the reaction IC-asc-C9-CoA + O2 = IC-asc-DeltaC9-CoA + H2O2. It carries out the reaction asc-C13-CoA + O2 = asc-DeltaC13-CoA + H2O2. It participates in lipid metabolism; peroxisomal fatty acid beta-oxidation. With respect to regulation, in contrast to other acyl-coenzyme A oxidases which bind to and are activated by ATP, does not bind ATP. In terms of biological role, involved in the first step of peroxisomal beta-oxidation by catalyzing the desaturation of fatty acid-derived side chains of ascaroside pheromones, which regulates development and behavior. Specifically, shortens indol-3-carbonyl(IC)-ascarosides with 7-carbon (IC-asc-C7) or 9-carbon (IC-asc-C9) side chains and contributes to the shortening of ascarosides with 13-carbon (asc-C13) and 15-carbon (asc-C15) side chains. In Caenorhabditis elegans, this protein is Acyl-coenzyme A oxidase acox-3.